The following is a 202-amino-acid chain: Transcription factor MUTE (202 aa).

In terms of domain architecture, bHLH spans 1–49 (MSHIAVERNRRRQMNEHLKSLRSLTPCFYIKRGDQASIIGGVIEFIKEL).

Homodimer. In terms of tissue distribution, leaf epidermis and flowers.

It localises to the nucleus. In terms of biological role, transcription factor. Together with FMA and SPCH, regulates the stomata formation. Required for the differentiation of stomatal guard cells, by promoting successive asymmetric cell divisions and the formation of guard mother cells. Promotes the conversion of the leaf epidermis into stomata. The protein is Transcription factor MUTE (MUTE) of Arabidopsis thaliana (Mouse-ear cress).